A 362-amino-acid polypeptide reads, in one-letter code: Phosphoserine aminotransferase (362 aa).

Arg-42 is an L-glutamate binding site. 4 residues coordinate pyridoxal 5'-phosphate: Trp-102, Thr-154, Asp-174, and Gln-197. Position 198 is an N6-(pyridoxal phosphate)lysine (Lys-198). Position 239 to 240 (239 to 240 (NT)) interacts with pyridoxal 5'-phosphate.

The protein belongs to the class-V pyridoxal-phosphate-dependent aminotransferase family. SerC subfamily. In terms of assembly, homodimer. Requires pyridoxal 5'-phosphate as cofactor.

Its subcellular location is the cytoplasm. It catalyses the reaction O-phospho-L-serine + 2-oxoglutarate = 3-phosphooxypyruvate + L-glutamate. The enzyme catalyses 4-(phosphooxy)-L-threonine + 2-oxoglutarate = (R)-3-hydroxy-2-oxo-4-phosphooxybutanoate + L-glutamate. The protein operates within amino-acid biosynthesis; L-serine biosynthesis; L-serine from 3-phospho-D-glycerate: step 2/3. It participates in cofactor biosynthesis; pyridoxine 5'-phosphate biosynthesis; pyridoxine 5'-phosphate from D-erythrose 4-phosphate: step 3/5. Its function is as follows. Catalyzes the reversible conversion of 3-phosphohydroxypyruvate to phosphoserine and of 3-hydroxy-2-oxo-4-phosphonooxybutanoate to phosphohydroxythreonine. The polypeptide is Phosphoserine aminotransferase (Haemophilus ducreyi (strain 35000HP / ATCC 700724)).